Consider the following 992-residue polypeptide: ATP-dependent DNA helicase PIF7 (992 aa).

Residues 1–21 (MWDGPLRSRQNLRTVAKLRSS) constitute a mitochondrion transit peptide. Disordered stretches follow at residues 20–43 (SSGCPLTQSAIHPTTTSPSEGETA), 145–182 (TVNKHSPPASKSAGISQQNDDGGCGASENVDNTTTAAS), and 190–209 (LDSSSSNCTPKQQAQQAVTQ). Composition is skewed to polar residues over residues 23 to 43 (CPLTQSAIHPTTTSPSEGETA), 173 to 182 (NVDNTTTAAS), and 191 to 208 (DSSSSNCTPKQQAQQAVT). 237–244 (GGAGTGKS) contacts ATP. Residues 651–670 (QAYVALSRCTDVANLVIENF) mediate DNA binding.

Belongs to the helicase family. PIF1 subfamily. Monomer. Mg(2+) serves as cofactor.

The protein localises to the mitochondrion matrix. It localises to the kinetoplast. The enzyme catalyses Couples ATP hydrolysis with the unwinding of duplex DNA at the replication fork by translocating in the 5'-3' direction. This creates two antiparallel DNA single strands (ssDNA). The leading ssDNA polymer is the template for DNA polymerase III holoenzyme which synthesizes a continuous strand.. It catalyses the reaction ATP + H2O = ADP + phosphate + H(+). Functionally, DNA-dependent ATPase and 5'-3' DNA helicase required for the maintenance of mitochondrial (kinetoplast) genome stability. The sequence is that of ATP-dependent DNA helicase PIF7 from Trypanosoma brucei brucei (strain 927/4 GUTat10.1).